Consider the following 931-residue polypeptide: Beta-mannosidase A (931 aa).

The signal sequence occupies residues 1 to 21; that stretch reads MRHSIGLAAALLAPTLPVALG. 7 N-linked (GlcNAc...) asparagine glycosylation sites follow: Asn-40, Asn-79, Asn-247, Asn-282, Asn-316, Asn-326, and Asn-347. The active-site Proton donor is Glu-479. N-linked (GlcNAc...) asparagine glycans are attached at residues Asn-550, Asn-608, Asn-658, Asn-738, Asn-790, Asn-798, Asn-830, and Asn-918.

This sequence belongs to the glycosyl hydrolase 2 family. Beta-mannosidase A subfamily. As to quaternary structure, homodimer.

The protein resides in the secreted. The enzyme catalyses Hydrolysis of terminal, non-reducing beta-D-mannose residues in beta-D-mannosides.. The protein operates within glycan metabolism; N-glycan degradation. In terms of biological role, exoglycosidase that cleaves the single beta-linked mannose residue from the non-reducing end of beta-mannosidic oligosaccharides of various complexity and length. Involved in the degradation of polymeric mannan and galactomannan. The protein is Beta-mannosidase A (mndA) of Aspergillus niger (strain ATCC MYA-4892 / CBS 513.88 / FGSC A1513).